The sequence spans 375 residues: Tyrosine--tRNA ligase (375 aa).

The L-tyrosine site is built by tyrosine 37, tyrosine 168, glutamine 172, aspartate 175, and glutamine 190. The short motif at 251–255 (KMSKS) is the 'KMSKS' region element. Lysine 254 is an ATP binding site.

The protein belongs to the class-I aminoacyl-tRNA synthetase family. TyrS type 4 subfamily. As to quaternary structure, homodimer.

Its subcellular location is the cytoplasm. It catalyses the reaction tRNA(Tyr) + L-tyrosine + ATP = L-tyrosyl-tRNA(Tyr) + AMP + diphosphate + H(+). Its function is as follows. Catalyzes the attachment of tyrosine to tRNA(Tyr) in a two-step reaction: tyrosine is first activated by ATP to form Tyr-AMP and then transferred to the acceptor end of tRNA(Tyr). The polypeptide is Tyrosine--tRNA ligase (Pyrococcus furiosus (strain ATCC 43587 / DSM 3638 / JCM 8422 / Vc1)).